A 383-amino-acid polypeptide reads, in one-letter code: Acyl-CoA dehydrogenase, short-chain specific (383 aa).

Glu367 acts as the Proton acceptor in catalysis.

The protein belongs to the acyl-CoA dehydrogenase family. In terms of assembly, homotetramer. It depends on FAD as a cofactor.

It carries out the reaction butanoyl-CoA + oxidized [electron-transfer flavoprotein] + H(+) = (2E)-butenoyl-CoA + reduced [electron-transfer flavoprotein]. The enzyme catalyses a short-chain 2,3-saturated fatty acyl-CoA + oxidized [electron-transfer flavoprotein] + H(+) = a short-chain (2E)-enoyl-CoA + reduced [electron-transfer flavoprotein]. Its function is as follows. Has an optimum specificity for 4-carbon length fatty acyl-CoAs. The sequence is that of Acyl-CoA dehydrogenase, short-chain specific from Megasphaera elsdenii.